The following is a 324-amino-acid chain: tRNA dimethylallyltransferase (324 aa).

15–22 contacts ATP; sequence GPTATGKS. 17 to 22 contacts substrate; the sequence is TATGKS. The segment at 40 to 43 is interaction with substrate tRNA; it reads DSAQ.

This sequence belongs to the IPP transferase family. In terms of assembly, monomer. It depends on Mg(2+) as a cofactor.

It carries out the reaction adenosine(37) in tRNA + dimethylallyl diphosphate = N(6)-dimethylallyladenosine(37) in tRNA + diphosphate. Its function is as follows. Catalyzes the transfer of a dimethylallyl group onto the adenine at position 37 in tRNAs that read codons beginning with uridine, leading to the formation of N6-(dimethylallyl)adenosine (i(6)A). The chain is tRNA dimethylallyltransferase from Moorella thermoacetica (strain ATCC 39073 / JCM 9320).